The primary structure comprises 183 residues: Peptide methionine sulfoxide reductase MsrA 1 (183 aa).

Cys12 is a catalytic residue.

This sequence belongs to the MsrA Met sulfoxide reductase family.

It carries out the reaction L-methionyl-[protein] + [thioredoxin]-disulfide + H2O = L-methionyl-(S)-S-oxide-[protein] + [thioredoxin]-dithiol. The enzyme catalyses [thioredoxin]-disulfide + L-methionine + H2O = L-methionine (S)-S-oxide + [thioredoxin]-dithiol. Functionally, has an important function as a repair enzyme for proteins that have been inactivated by oxidation. Catalyzes the reversible oxidation-reduction of methionine sulfoxide in proteins to methionine. The protein is Peptide methionine sulfoxide reductase MsrA 1 (msrA1) of Lactococcus lactis subsp. lactis (strain IL1403) (Streptococcus lactis).